We begin with the raw amino-acid sequence, 1152 residues long: MSIRFIYGRAGSGKSLFCINQIKKLIDSDKEKKIILLVPEQYTFTTENKVLNYIGERAFLNTHVLSFRTMCQKVFEECGGRVKQIIKDTGKHMLINKVLNEKIDDLSYFKKMSREQGFNNIISELITEFKKYNINIDALRDLTDKIDDNELVEKIRELSLIYEEFNVKMHSSYIDTDDELTLLAKKLLANNIYANSEIWIDEFTTFTPQQLEIIRILSKASVVNITLCMDKIENSDVEDITNVFSSIENTENRLLKLMEENNIGYLNPINLNSKLPYRFKNSEELSHIEKYCITYPFKSYKGKNKDVRLYKANNTYDEIEKVAKDIIRLVRDRNYRFRDISVVCRNIENYNKIISVIFNDYEIPFFMDQKIKLLNNPLIVLITSAFEVVLKNWSYESVFKYLKSGLTGFNIYDIDRLENFVLEHGIKSYKWNEEEIEKLKNIKIENGATEDELTIFNLMEEVRNSLISFHKLIEGKHYVRDICKALYEFLLSIKAFERIDEWIIKFEELKLEDKVKEYKQVESIVIDMLDQAVEVMGSDVVDTFEFFKILNSGFENEEIGVIPVALDQVNVGDIARIKGREVKALYIVGINDGILPAAHKDEGILSDRDRIELKEFGIVLAADGRSKAFEEQFVVYTALTIASEYLMLSYPMADFEGKSLRPSIIISRIKKILPNLVEESSLYDLSKRSDHFNKVISPIPTFNELIFALRRELEDEDIDEEYWGEVYNWFKENEDFKWKIENTFKGLRYSNTGEKVSRNKLLSLYKNDLGKLSFSVSRLEKYAECPFSYFIQYGLKAKNRKVYEFTPPDLGSFVHDILDSFTNKVKKEKIAWSDLDMIKCKNIVSELIDTKLKEDSGSILNSTNKYKYFSKRFKRVISKSVSVISEQMRRGEFEVFNNEFSFGSYNDGEAIVLELPSNEKVYLNGRIDRIDTLDLEGSTYLRIVDYKTGNKHFDLNQFYYGLQMQLLVYLDALIKNSEYILKKQALPGAVLYFKVDDPIIKTKGDITTEELEKEVLSNLKMNGLILKDAKVVKAMDRGIETDGYSLVIPAALKKDGDFKAGSEVVTEEQFTLLREYVNKKMIDLCEDMLCGDIKIQPTKDSDGSHCEFCDFSSICQFDSSIEDNKYKIIMKKSKDEIWNNIRDELNDDKKEN.

The region spanning 1 to 338 (MSIRFIYGRA…LVRDRNYRFR (338 aa)) is the UvrD-like helicase ATP-binding domain. Residue 8–15 (GRAGSGKS) coordinates ATP. The UvrD-like helicase C-terminal domain occupies 276–579 (PYRFKNSEEL…NVGDIARIKG (304 aa)). Residues Cys785, Cys1106, Cys1109, and Cys1115 each coordinate [4Fe-4S] cluster.

This sequence belongs to the helicase family. AddB/RexB type 1 subfamily. Heterodimer of AddA and AddB. Mg(2+) serves as cofactor. It depends on [4Fe-4S] cluster as a cofactor.

The heterodimer acts as both an ATP-dependent DNA helicase and an ATP-dependent, dual-direction single-stranded exonuclease. Recognizes the chi site generating a DNA molecule suitable for the initiation of homologous recombination. The AddB subunit has 5' -&gt; 3' nuclease activity but not helicase activity. This Clostridium botulinum (strain Alaska E43 / Type E3) protein is ATP-dependent helicase/deoxyribonuclease subunit B.